Reading from the N-terminus, the 542-residue chain is Protein MGF 505-10R (542 aa).

It belongs to the asfivirus MGF 505 family.

Its function is as follows. Plays a role in virus cell tropism, and may be required for efficient virus replication in macrophages. The chain is Protein MGF 505-10R from Ornithodoros (relapsing fever ticks).